A 512-amino-acid chain; its full sequence is Cytochrome P450 monooxygenase adrA (512 aa).

A helical membrane pass occupies residues 12 to 32; it reads FEPVSLVGLVLLSGLFLLLTA. Residues Asn86, Asn149, and Asn210 are each glycosylated (N-linked (GlcNAc...) asparagine). Cys453 provides a ligand contact to heme.

The protein belongs to the cytochrome P450 family. It depends on heme as a cofactor.

The protein resides in the membrane. It participates in secondary metabolite biosynthesis; terpenoid biosynthesis. Its function is as follows. Cytochrome P450 monooxygenase; part of the gene cluster that mediates the biosynthesis of andrastins, meroterpenoid compounds that exhibit inhibitory activity against ras farnesyltransferase, suggesting that they could be promising leads for antitumor agents. The first step of the pathway is the synthesis of 3,5-dimethylorsellinic acid (DMOA) by the polyketide synthase adrD via condensation of one acetyl-CoA starter unit with 3 malonyl-CoA units and 2 methylations. DMAO is then converted to farnesyl-DMAO by the prenyltransferase adrG. The methyltransferase adrK catalyzes the methylation of the carboxyl group of farnesyl-DMAO to farnesyl-DMAO methyl ester which is further converted to epoxyfarnesyl-DMAO methyl ester by the FAD-dependent monooxygenase adrH. The terpene cyclase adrI then catalyzes the carbon skeletal rearrangement to generate the andrastin E, the first compound in the pathway having the andrastin scaffold, with the tetracyclic ring system. The post-cyclization tailoring enzymes adrF, adrE, adrJ, and adrA, are involved in the conversion of andrastin E into andrastin A. The short chain dehydrogenase adrF is responsible for the oxidation of the C-3 a hydroxyl group of andrastin E to yield the corresponding ketone, andrastin D. The ketoreductase adrE stereoselectively reduces the carbonyl moiety to reverse the stereochemistry of the C-3 position to yield andrastin F. The acetyltransferase adrJ is the acetyltransferase that attaches the acetyl group to the C-3 hydroxyl group of andrastin F to yield andrastin C. Finally, the cytochrome P450 monooxygenase adrA catalyzes two sequential oxidation reactions of the C-23 methyl group, to generate the corresponding alcohol andrastin B, and aldehyde andrastin A. The polypeptide is Cytochrome P450 monooxygenase adrA (Penicillium rubens (strain ATCC 28089 / DSM 1075 / NRRL 1951 / Wisconsin 54-1255) (Penicillium chrysogenum)).